Reading from the N-terminus, the 535-residue chain is Glutamate--cysteine ligase (535 aa).

It belongs to the glutamate--cysteine ligase type 1 family. Type 1 subfamily.

The catalysed reaction is L-cysteine + L-glutamate + ATP = gamma-L-glutamyl-L-cysteine + ADP + phosphate + H(+). It functions in the pathway sulfur metabolism; glutathione biosynthesis; glutathione from L-cysteine and L-glutamate: step 1/2. This chain is Glutamate--cysteine ligase, found in Pseudomonas savastanoi pv. phaseolicola (strain 1448A / Race 6) (Pseudomonas syringae pv. phaseolicola (strain 1448A / Race 6)).